A 109-amino-acid chain; its full sequence is ATP synthase subunit c (109 aa).

Transmembrane regions (helical) follow at residues 42 to 62 (YIGT…QGFS) and 88 to 108 (LALA…IIFV).

This sequence belongs to the ATPase C chain family. As to quaternary structure, F-type ATPases have 2 components, F(1) - the catalytic core - and F(0) - the membrane proton channel. F(1) has five subunits: alpha(3), beta(3), gamma(1), delta(1), epsilon(1). F(0) has three main subunits: a(1), b(2) and c(10-14). The alpha and beta chains form an alternating ring which encloses part of the gamma chain. F(1) is attached to F(0) by a central stalk formed by the gamma and epsilon chains, while a peripheral stalk is formed by the delta and b chains.

It localises to the cell membrane. Its function is as follows. F(1)F(0) ATP synthase produces ATP from ADP in the presence of a proton or sodium gradient. F-type ATPases consist of two structural domains, F(1) containing the extramembraneous catalytic core and F(0) containing the membrane proton channel, linked together by a central stalk and a peripheral stalk. During catalysis, ATP synthesis in the catalytic domain of F(1) is coupled via a rotary mechanism of the central stalk subunits to proton translocation. Key component of the F(0) channel; it plays a direct role in translocation across the membrane. A homomeric c-ring of between 10-14 subunits forms the central stalk rotor element with the F(1) delta and epsilon subunits. This Ureaplasma parvum serovar 3 (strain ATCC 27815 / 27 / NCTC 11736) protein is ATP synthase subunit c.